An 89-amino-acid chain; its full sequence is Small ribosomal subunit protein uS15 (89 aa).

This sequence belongs to the universal ribosomal protein uS15 family. As to quaternary structure, part of the 30S ribosomal subunit. Forms a bridge to the 50S subunit in the 70S ribosome, contacting the 23S rRNA.

In terms of biological role, one of the primary rRNA binding proteins, it binds directly to 16S rRNA where it helps nucleate assembly of the platform of the 30S subunit by binding and bridging several RNA helices of the 16S rRNA. Functionally, forms an intersubunit bridge (bridge B4) with the 23S rRNA of the 50S subunit in the ribosome. In Gluconobacter oxydans (strain 621H) (Gluconobacter suboxydans), this protein is Small ribosomal subunit protein uS15.